We begin with the raw amino-acid sequence, 219 residues long: 7-cyano-7-deazaguanine synthase (219 aa).

10–20 contacts ATP; it reads FSGGQDSTTCL. Zn(2+) is bound by residues Cys188, Cys196, Cys199, and Cys202.

This sequence belongs to the QueC family. The cofactor is Zn(2+).

It carries out the reaction 7-carboxy-7-deazaguanine + NH4(+) + ATP = 7-cyano-7-deazaguanine + ADP + phosphate + H2O + H(+). Its pathway is purine metabolism; 7-cyano-7-deazaguanine biosynthesis. Functionally, catalyzes the ATP-dependent conversion of 7-carboxy-7-deazaguanine (CDG) to 7-cyano-7-deazaguanine (preQ(0)). The sequence is that of 7-cyano-7-deazaguanine synthase from Neisseria gonorrhoeae (strain NCCP11945).